We begin with the raw amino-acid sequence, 185 residues long: MSASELKEMEQKMEQAVQALSKNLASVRAGRANPSILDSVFVDYYGASTPLNQLASVGAPEARLLTITPYDKSAIGDIEKAIQKADLGLSPSSDGNIIRINIPALTQERRKDLVKVVGKYSEEAKVQIRNIRRDTNDQLKKMEKNGDLTEDDLRGFQDDVQTSTNDYINKIDQLAKNKENEIMEV.

The protein belongs to the RRF family.

The protein localises to the cytoplasm. Functionally, responsible for the release of ribosomes from messenger RNA at the termination of protein biosynthesis. May increase the efficiency of translation by recycling ribosomes from one round of translation to another. The polypeptide is Ribosome-recycling factor (Oceanobacillus iheyensis (strain DSM 14371 / CIP 107618 / JCM 11309 / KCTC 3954 / HTE831)).